We begin with the raw amino-acid sequence, 208 residues long: MANNTRARRTARLSRALGIALTPKAAKYMERRPYGPGEHGRARKKQDSDYAVRLREKQRLRAQYGIREAQMTRAFEEARRTKGLTGENLIELLEMRLDALVLRAGFARTIAQARQLVVHRHILVDGIRVDRPSFRVGEGQLVHVHSRSETMPPFQVAAAGAHRDVLPQVPAYLDVKLDALQARLVRRPKRSEVPVTCEEQLVVEFYAR.

Residues 28 to 48 (YMERRPYGPGEHGRARKKQDS) form a disordered region. The 66-residue stretch at 95-160 (MRLDALVLRA…MPPFQVAAAG (66 aa)) folds into the S4 RNA-binding domain.

The protein belongs to the universal ribosomal protein uS4 family. Part of the 30S ribosomal subunit. Contacts protein S5. The interaction surface between S4 and S5 is involved in control of translational fidelity.

In terms of biological role, one of the primary rRNA binding proteins, it binds directly to 16S rRNA where it nucleates assembly of the body of the 30S subunit. With S5 and S12 plays an important role in translational accuracy. The chain is Small ribosomal subunit protein uS4 from Arthrobacter sp. (strain FB24).